Here is a 2705-residue protein sequence, read N- to C-terminus: Teneurin-1 (2705 aa).

2 disordered regions span residues 1 to 73 and 135 to 222; these read MEQM…STQD and CLSS…TQDS. One can recognise a Teneurin N-terminal domain in the interval 1–299; sequence MEQMDCKPYQ…KPYRCCNWKC (299 aa). Topologically, residues 1 to 305 are cytoplasmic; it reads MEQMDCKPYQ…NWKCTALSAT (305 aa). Basic and acidic residues predominate over residues 32 to 46; that stretch reads DGRKQRQSYDSRETL. The Nuclear localization signal (NLS) signature appears at 62–65; it reads RKRK. Residues 135–147 show a composition bias toward polar residues; the sequence is CLSSRANSALSLT. The segment covering 148-157 has biased composition (basic and acidic residues); it reads DTDHERKSDG. Residues 173–182 show a composition bias toward pro residues; that stretch reads PLPPPPPPPH. Positions 271–278 match the Required for interaction with SORBS1 (Ten-1 ICD form) motif; that stretch reads PPPRPLPR. The chain crosses the membrane as a helical span at residues 306–326; sequence AITVTLALLLAYVIAVHLFGL. The Extracellular segment spans residues 327–2705; sequence TWQLQPVEGQ…FMRQSEIGRR (2379 aa). Asparagine 414 carries N-linked (GlcNAc...) asparagine glycosylation. EGF-like domains are found at residues 509–540, 541–572, 573–605, 606–638, 639–672, 673–702, 703–734, and 735–769; these read VLDD…PDCA, KDSC…ECDV, PEEQ…EICE, EEDC…NCET, SLPI…SDCS, TELC…GPTC, EERT…DHCT, and IDGC…SGCN. 22 disulfides stabilise this stretch: cysteine 513/cysteine 523, cysteine 517/cysteine 528, cysteine 530/cysteine 539, cysteine 548/cysteine 559, cysteine 561/cysteine 570, cysteine 577/cysteine 588, cysteine 582/cysteine 593, cysteine 595/cysteine 604, cysteine 609/cysteine 620, cysteine 614/cysteine 625, cysteine 627/cysteine 636, cysteine 647/cysteine 660, cysteine 662/cysteine 671, cysteine 676/cysteine 686, cysteine 680/cysteine 691, cysteine 693/cysteine 702, cysteine 707/cysteine 717, cysteine 711/cysteine 722, cysteine 724/cysteine 733, cysteine 738/cysteine 748, cysteine 742/cysteine 757, and cysteine 759/cysteine 768. Asparagine 878 and asparagine 1057 each carry an N-linked (GlcNAc...) asparagine glycan. NHL repeat units follow at residues 1167–1192, 1202–1246, 1272–1316, 1331–1382, and 1461–1504; these read LFAP…VRRI, LELR…AKSL, SHCG…NGMI, LSCD…IAGR, and CFSG…VSRN. The YD 1 repeat unit spans residues 1514 to 1533; the sequence is YEIASPADQELYQFTINGTH. Residues asparagine 1530 and asparagine 1547 are each glycosylated (N-linked (GlcNAc...) asparagine). YD repeat units follow at residues 1550–1570, 1588–1612, 1613–1634, and 1635–1655; these read YSGE…VHIR, YWLT…ALMT, YPGN…TVYE, and YDSD…SSFH. 5 N-linked (GlcNAc...) asparagine glycosylation sites follow: asparagine 1643, asparagine 1679, asparagine 1737, asparagine 1761, and asparagine 1822. YD repeat units follow at residues 1825–1844, 1845–1865, 1866–1884, 1885–1905, 1913–1929, 1930–1949, 1950–1969, 1972–1992, 1995–2015, 2065–2085, and 2093–2113; these read YSHS…EKME, YDPS…WSYT, YLEK…YIFE, YDQS…HALQ, YRNI…FIQD, VTRD…RRVL, YKYS…TQVT, YEES…FICT, YRQT…EGLV, YDLN…FSAN, and YEIL…MGRM. An N-linked (GlcNAc...) asparagine glycan is attached at asparagine 2125. YD repeat units follow at residues 2133 to 2153, 2154 to 2174, 2176 to 2196, 2208 to 2228, and 2230 to 2250; these read YDRD…WRYS, YDLN…LTPL, YDLR…DEDG, YNSN…TVQY, and YDGL…LQFF. Asparagine 2265 carries N-linked (GlcNAc...) asparagine glycosylation. YD repeat units lie at residues 2276–2293 and 2294–2317; these read YDLQ…GEEY and YVAC…IKEI. N-linked (GlcNAc...) asparagine glycosylation is present at asparagine 2582.

This sequence belongs to the tenascin family. Teneurin subfamily. As to quaternary structure, homodimer; disulfide-linked. Heterodimer with other teneurins. Ten-1 ICD interacts with SORBS1 (via third SH3 domain). Interacts with MBD1 isoform 2. Post-translationally, derives from the plasma membrane form by proteolytic processing. Further proteolytic cleavage may be generated. In terms of processing, derives from the plasma membrane form by proteolytic cleavage and translocates to the nucleus. In terms of tissue distribution, expressed in the neurons of the developing visual system and in fetal brain.

Its subcellular location is the cell membrane. It is found in the nucleus. It localises to the nucleus speckle. The protein localises to the nucleus matrix. The protein resides in the cytoplasm. Its subcellular location is the cytoskeleton. In terms of biological role, involved in neural development, regulating the establishment of proper connectivity within the nervous system. May function as a cellular signal transducer. Functionally, plays a role in the regulation of neuroplasticity in the limbic system. Mediates a rapid reorganization of actin- and tubulin-based cytoskeleton elements with an increase in dendritic arborization and spine density formation of neurons in the hippocampus and amygdala. Induces BDNF transcription inhibition in neurons. Activates the mitogen-activated protein (MAP) kinase 2 (MEK2) and extracellular signal-regulated kinase (ERK) cascade. Its function is as follows. Induces gene transcription activation. The chain is Teneurin-1 (TENM1) from Gallus gallus (Chicken).